The following is a 343-amino-acid chain: Stimulator of interferon genes protein homolog (343 aa).

N84 is a glycosylation site (N-linked (GlcNAc...) asparagine). A run of 2 helical transmembrane segments spans residues I87 to Y107 and N109 to T129. N157 contributes to the 3',2'-cGAMP binding site. N-linked (GlcNAc...) asparagine glycosylation occurs at N187. A helical membrane pass occupies residues L195 to D215. Positions 232, 235, 255, 258, and 262 each coordinate 3',2'-cGAMP. N270 and N333 each carry an N-linked (GlcNAc...) asparagine glycan.

It belongs to the STING family.

The protein resides in the endoplasmic reticulum membrane. Functionally, facilitator of innate immune signaling that binds cyclic dinucleotides produced in response to infection by bacteria and/or viruses, and promotes the activation of the NF-kappa-B transcription factor Rel (Relish). Recognizes and binds cyclic di-GMP (c-di-GMP), a cyclic dinucleotide messenger produced by bacteria such as L.monocytogenes, leading to activation of the peptidoglycan recognition protein (IMD) signaling pathway and activation of Rel (Relish). Innate immune response is triggered in response to double-stranded RNA from viruses delivered to the cytoplasm: Sting acts by specifically binding cyclic dinucleotides 3',2'-cGAMP and 2',3'-cGAMP produced by cGlr1 and cGlr2 in response to RNA virus in the cytosol. Has a strong preference for 3',2'-cGAMP compared to other cyclic dinucleotides such as 2',3'-cGAMP or 3'3'-c-di-GMP. Upon binding to 3',2'-cGAMP, activates an antiviral immune response, leading to the activation of Rel (Relish). Activated in brain in response to Zika virus infection, leading to autophagy. The polypeptide is Stimulator of interferon genes protein homolog (Drosophila melanogaster (Fruit fly)).